The primary structure comprises 266 residues: MSEIHSIMITNRQGKTLSVQINGPENAPAIVFSNSLGTDHGMWQPQVAALKSQYRVVTYDTRGHGQSDVIENTTLQNLGEDVLDILDALNIEKAHFCGISMGGLTALWLGIYQAARFYSITVANSAAKIWTEDGWNARAEAVEANGLADLVASTHTRWFSDKFDYKNDNLAQKTIQSLADTPAQGYANACRALAKADVREKLASISIPTLIIAGSADPVTTITDGEFMQQHIQCNQFEVIDASHLSNIEQPEKFIQIFSGFVKSIQ.

In terms of domain architecture, AB hydrolase-1 spans 28–250; it reads PAIVFSNSLG…DASHLSNIEQ (223 aa).

The enzyme catalyses (4,5-dihydro-5-oxofuran-2-yl)-acetate + H2O = 3-oxoadipate + H(+). It participates in aromatic compound metabolism; beta-ketoadipate pathway; 3-oxoadipate from 5-oxo-4,5-dihydro-2-furylacetate: step 1/1. The polypeptide is 3-oxoadipate enol-lactonase 1 (pcaD) (Acinetobacter baylyi (strain ATCC 33305 / BD413 / ADP1)).